A 503-amino-acid chain; its full sequence is Putative FBD-associated F-box protein At5g56410 (503 aa).

An F-box domain is found at 2-50 (DKITGFSDDELLVKILSFLPTKAAVTTSILSKQWKFLWMRLPKLEYHDD). The 52-residue stretch at 361–412 (FWEQMITSVPQCLLSSLQTFKWLGNGDSIEGKDLATFILRNSCQLKTATISI) folds into the FBD domain.

The protein is Putative FBD-associated F-box protein At5g56410 of Arabidopsis thaliana (Mouse-ear cress).